A 160-amino-acid polypeptide reads, in one-letter code: Ribosomal RNA large subunit methyltransferase H (160 aa).

Residues leucine 76 and glycine 108 each contribute to the S-adenosyl-L-methionine site.

The protein belongs to the RNA methyltransferase RlmH family. In terms of assembly, homodimer.

The protein resides in the cytoplasm. It catalyses the reaction pseudouridine(1915) in 23S rRNA + S-adenosyl-L-methionine = N(3)-methylpseudouridine(1915) in 23S rRNA + S-adenosyl-L-homocysteine + H(+). Specifically methylates the pseudouridine at position 1915 (m3Psi1915) in 23S rRNA. The polypeptide is Ribosomal RNA large subunit methyltransferase H (Rhodopseudomonas palustris (strain BisB5)).